A 441-amino-acid chain; its full sequence is Ribosomal protein uS12 methylthiotransferase RimO (441 aa).

The 111-residue stretch at 8–118 folds into the MTTase N-terminal domain; it reads PKIGFVSLGC…VLQHVHHYVP (111 aa). [4Fe-4S] cluster contacts are provided by C17, C53, C82, C150, C154, and C157. The Radical SAM core domain occupies 136-373; it reads LTPRHYAYLK…MQLQQQISAE (238 aa). The TRAM domain occupies 376–441; that stretch reads QEKVGREILV…DEYDLWGSRV (66 aa).

Belongs to the methylthiotransferase family. RimO subfamily. Requires [4Fe-4S] cluster as cofactor.

The protein localises to the cytoplasm. The enzyme catalyses L-aspartate(89)-[ribosomal protein uS12]-hydrogen + (sulfur carrier)-SH + AH2 + 2 S-adenosyl-L-methionine = 3-methylsulfanyl-L-aspartate(89)-[ribosomal protein uS12]-hydrogen + (sulfur carrier)-H + 5'-deoxyadenosine + L-methionine + A + S-adenosyl-L-homocysteine + 2 H(+). Functionally, catalyzes the methylthiolation of an aspartic acid residue of ribosomal protein uS12. The sequence is that of Ribosomal protein uS12 methylthiotransferase RimO from Salmonella agona (strain SL483).